The chain runs to 407 residues: Arginine deiminase (407 aa).

The Amidino-cysteine intermediate role is filled by Cys-397.

This sequence belongs to the arginine deiminase family.

Its subcellular location is the cytoplasm. The catalysed reaction is L-arginine + H2O = L-citrulline + NH4(+). The protein operates within amino-acid degradation; L-arginine degradation via ADI pathway; carbamoyl phosphate from L-arginine: step 1/2. The sequence is that of Arginine deiminase from Pediococcus pentosaceus (strain ATCC 25745 / CCUG 21536 / LMG 10740 / 183-1w).